A 179-amino-acid polypeptide reads, in one-letter code: Small heat shock protein hspK (179 aa).

The sHSP domain occupies 32 to 178 (HRINIWRPTV…DRLKIPIQSK (147 aa)). The disordered stretch occupies residues 80–122 (KKSKGGLNNLPSSSSSINSDSTTNTNTNTTTTTTTAPPPPSDA). Residues 87–114 (NNLPSSSSSINSDSTTNTNTNTTTTTTT) show a composition bias toward low complexity.

Belongs to the small heat shock protein (HSP20) family.

The protein is Small heat shock protein hspK (hspK) of Dictyostelium discoideum (Social amoeba).